The following is a 344-amino-acid chain: Cyclin-D1-binding protein 1 homolog (344 aa).

The disordered stretch occupies residues 191–215 (SQDPFGDVLDDDDDDEGGRGNQDRY).

This sequence belongs to the CCNDBP1 family.

Its subcellular location is the cytoplasm. The protein localises to the nucleus. Its function is as follows. May negatively regulate cell cycle progression. The chain is Cyclin-D1-binding protein 1 homolog (ccndbp1) from Danio rerio (Zebrafish).